We begin with the raw amino-acid sequence, 810 residues long: Volume-regulated anion channel subunit LRRC8A (810 aa).

An N-acetylmethionine modification is found at methionine 1. The Cytoplasmic portion of the chain corresponds to 1 to 23; sequence MIPVTELRYFADTQPAYRILKPW. The helical transmembrane segment at 24-47 threads the bilayer; the sequence is WDVFTDYISIVMLMIAVFGGTLQV. At 48–123 the chain is on the extracellular side; sequence TQDKMICLPC…YENRLHWFAK (76 aa). Disulfide bonds link cysteine 54–cysteine 310, cysteine 57–cysteine 65, and cysteine 113–cysteine 295. Residues asparagine 66 and asparagine 83 are each glycosylated (N-linked (GlcNAc...) asparagine). Residues 124–142 traverse the membrane as a helical segment; it reads YFPYLVLLHTLIFLACSNF. Over 143-264 the chain is Cytoplasmic; that stretch reads WFKFPRTSSK…EEGDIVYRLY (122 aa). Threonine 200 carries the post-translational modification Phosphothreonine. A Phosphoserine modification is found at serine 202. At threonine 215 the chain carries Phosphothreonine. Serine 217 carries the post-translational modification Phosphoserine. A helical transmembrane segment spans residues 265–286; sequence MRQTIIKVIKFILIICYTVYYV. Over 287-316 the chain is Extracellular; that stretch reads HNIKFDVDCTVDIESLTGYRTYRCAHPLAT. The helical transmembrane segment at 317-341 threads the bilayer; it reads LFKILASFYISLVIFYGLICMYTLW. Over 342–810 the chain is Cytoplasmic; it reads WMLRRSLKKY…RLWRADKEQA (469 aa). LRR repeat units lie at residues 399–422, 423–445, 447–468, 469–492, 493–515, 518–542, 543–565, 567–589, 590–613, 615–637, 639–661, 662–684, 686–707, 708–730, 732–753, 754–776, and 778–801; these read ENKL…RLTK, NAQD…VFDL, ELEV…IAQL, TGLK…AFLR, ENLR…IYSL, LEEL…GLRE, LKRL…VTDV, VHLQ…SLKK, MANL…IFSL, NLQE…SFQH, HRLT…IGNL, TNLE…LFYC, KLRY…IGLL, QNLQ…LFQC, KLRA…VGEL, TNLT…LGEC, and LLKR…VKER. Positions 706–707 match the Di-leucine motif motif; that stretch reads LL.

This sequence belongs to the LRRC8 family. Heterohexamer; oligomerizes with other LRRC8 proteins (LRRC8B, LRRC8C, LRRC8D and/or LRRC8E) to form a heterohexamer. Can form homohexamers in vitro, but these have lower conductance than heterohexamers. In vivo, the subunit composition may depend primarily on expression levels, and heterooligomeric channels containing various proportions of the different LRRC8 proteins may coexist. Interact with GRB2. Interacts with NOX4; this interaction prevents the ubiquitin-mediated degradation of LRRC8A. In terms of processing, N-glycosylated. In terms of tissue distribution, expressed in brain, kidney, ovary, lung, liver, heart, and fetal brain and liver. Found at high levels in bone marrow; lower levels are detected in peripheral blood cells. Expressed on T-cells as well as on B-lineage cells.

It is found in the cell membrane. The protein localises to the lysosome membrane. It catalyses the reaction chloride(in) = chloride(out). The enzyme catalyses iodide(out) = iodide(in). The catalysed reaction is taurine(out) = taurine(in). It carries out the reaction L-aspartate(out) = L-aspartate(in). It catalyses the reaction L-glutamate(out) = L-glutamate(in). The enzyme catalyses myo-inositol(out) = myo-inositol(in). The catalysed reaction is 2',3'-cGAMP(out) = 2',3'-cGAMP(in). Its activity is regulated as follows. Inhibited by (4-[(2-butyl-6,7-dichloro-2-cyclopentyl-2,3-dihydro-1-oxo-1H-inden-5-yl)oxy]butanoic acid), which plugs the channel like a cork in a bottle by binding in the extracellular selectivity filter and sterically occluding ion conduction. Lipids may block conduction in closed heterohexameric channels. Functionally, essential component of the volume-regulated anion channel (VRAC, also named VSOAC channel), an anion channel required to maintain a constant cell volume in response to extracellular or intracellular osmotic changes. The VRAC channel conducts iodide better than chloride and can also conduct organic osmolytes like taurine. Mediates efflux of amino acids, such as aspartate and glutamate, in response to osmotic stress. LRRC8A and LRRC8D are required for the uptake of the drug cisplatin. In complex with LRRC8C or LRRC8E, acts as a transporter of immunoreactive cyclic dinucleotide GMP-AMP (2'-3'-cGAMP), an immune messenger produced in response to DNA virus in the cytosol: mediates both import and export of 2'-3'-cGAMP, thereby promoting transfer of 2'-3'-cGAMP to bystander cells. In contrast, complexes containing LRRC8D inhibit transport of 2'-3'-cGAMP. Required for in vivo channel activity, together with at least one other family member (LRRC8B, LRRC8C, LRRC8D or LRRC8E); channel characteristics depend on the precise subunit composition. Can form functional channels by itself (in vitro). Involved in B-cell development: required for the pro-B cell to pre-B cell transition. Also required for T-cell development. Required for myoblast differentiation: VRAC activity promotes membrane hyperpolarization and regulates insulin-stimulated glucose metabolism and oxygen consumption. Also acts as a regulator of glucose-sensing in pancreatic beta cells: VRAC currents, generated in response to hypotonicity- or glucose-induced beta cell swelling, depolarize cells, thereby causing electrical excitation, leading to increase glucose sensitivity and insulin secretion. Also plays a role in lysosome homeostasis by forming functional lysosomal VRAC channels in response to low cytoplasmic ionic strength condition: lysosomal VRAC channels are necessary for the formation of large lysosome-derived vacuoles, which store and then expel excess water to maintain cytosolic water homeostasis. Acts as a key factor in NLRP3 inflammasome activation by modulating itaconate efflux and mitochondria function. In Homo sapiens (Human), this protein is Volume-regulated anion channel subunit LRRC8A.